The sequence spans 647 residues: Chaperone protein HtpG (647 aa).

Residues 1-353 are a; substrate-binding; the sequence is MNAHVEQLEF…AQDMSLNVSR (353 aa). The tract at residues 354-567 is b; sequence EILQQDRQIK…AFGMTPALAR (214 aa). The tract at residues 568–647 is c; it reads IYRASGQEVP…LLAERLARTL (80 aa).

It belongs to the heat shock protein 90 family. Homodimer.

The protein resides in the cytoplasm. In terms of biological role, molecular chaperone. Has ATPase activity. In Mycobacterium bovis (strain ATCC BAA-935 / AF2122/97), this protein is Chaperone protein HtpG.